Consider the following 658-residue polypeptide: UvrABC system protein B (658 aa).

The Helicase ATP-binding domain maps to 25 to 182; that stretch reads ESLNGGNSHQ…KGLVDIQYSR (158 aa). An ATP-binding site is contributed by 38-45; that stretch reads GVTGSGKT. The Beta-hairpin motif lies at 91–114; sequence YYDYYQPEAYIPQTDTYIEKDASI. In terms of domain architecture, Helicase C-terminal spans 429–595; sequence QIDDLYSEIN…TVQKKVHDVI (167 aa). Positions 622-657 constitute a UVR domain; sequence KELIAKLQEEMKQAAKELEFEKAAELRDLIMELKTA.

This sequence belongs to the UvrB family. In terms of assembly, forms a heterotetramer with UvrA during the search for lesions. Interacts with UvrC in an incision complex.

Its subcellular location is the cytoplasm. The UvrABC repair system catalyzes the recognition and processing of DNA lesions. A damage recognition complex composed of 2 UvrA and 2 UvrB subunits scans DNA for abnormalities. Upon binding of the UvrA(2)B(2) complex to a putative damaged site, the DNA wraps around one UvrB monomer. DNA wrap is dependent on ATP binding by UvrB and probably causes local melting of the DNA helix, facilitating insertion of UvrB beta-hairpin between the DNA strands. Then UvrB probes one DNA strand for the presence of a lesion. If a lesion is found the UvrA subunits dissociate and the UvrB-DNA preincision complex is formed. This complex is subsequently bound by UvrC and the second UvrB is released. If no lesion is found, the DNA wraps around the other UvrB subunit that will check the other stand for damage. In Natranaerobius thermophilus (strain ATCC BAA-1301 / DSM 18059 / JW/NM-WN-LF), this protein is UvrABC system protein B.